The primary structure comprises 355 residues: Cyclic nucleotide-gated potassium channel RHE_CH03180 (355 aa).

Over 1–12 (MSAVPFSKISTP) the chain is Cytoplasmic. Residues 13–30 (LNALFATIGLLVVAALTT) traverse the membrane as a helical segment. At 31 to 38 (QGLTGQER) the chain is on the periplasmic side. Residues 39-61 (LVFELLLAAIWLAYVLQLSGTLL) form a helical membrane-spanning segment. The Cytoplasmic portion of the chain corresponds to 62-73 (SRRRRLSGEMTA). The helical transmembrane segment at 74-93 (LVIDLLAVLVPAAAFLFVGS) threads the bilayer. A helical transmembrane segment spans residues 94–111 (RDRDLYCAIWLLKPLRDS). Over 112–128 (TFFRLLAKVVANESRNL) the chain is Cytoplasmic. A helical transmembrane segment spans residues 129–149 (LGVTSVFGIVLFGAALAGYII). The Periplasmic portion of the chain corresponds to 150–160 (ERDVQPDKFGS). The segment at residues 161-179 (IPQAMWWAVVTLSTTGYGD) is an intramembrane region (pore-forming). The short motif at 174 to 179 (TTGYGD) is the Selectivity filter element. Topologically, residues 180-184 (EIPQS) are periplasmic. The helical transmembrane segment at 185-209 (LAGRVLAGLVMMSGIGIFALWAGIL) threads the bilayer. At 210–355 (ATGFYEEVRR…LERRGGPPKE (146 aa)) the chain is on the cytoplasmic side. Residues 297–298 (GE), 307–308 (RS), and R348 each bind 3',5'-cyclic AMP.

This sequence belongs to the potassium channel family. In terms of assembly, homotetramer.

It is found in the cell membrane. In terms of biological role, cyclic nucleotide-regulated potassium channel activated by cAMP. This chain is Cyclic nucleotide-gated potassium channel RHE_CH03180, found in Rhizobium etli (strain ATCC 51251 / DSM 11541 / JCM 21823 / NBRC 15573 / CFN 42).